A 348-amino-acid polypeptide reads, in one-letter code: dTDP-glucose 4,6-dehydratase (348 aa).

NAD(+) contacts are provided by residues 15 to 16, 37 to 40, 62 to 63, and 82 to 86; these read FI, DKLT, DI, and YAAES. Substrate is bound by residues serine 86 and asparagine 88. Position 101 (threonine 101) interacts with NAD(+). Threonine 125 is a substrate binding site. Aspartate 126 functions as the Proton donor in the catalytic mechanism. Active-site proton acceptor residues include glutamate 127 and tyrosine 161. 161-165 is a binding site for NAD(+); the sequence is YSSTK. Substrate is bound at residue asparagine 190. Position 191 (asparagine 191) interacts with NAD(+). Residues 200–205, 216–218, arginine 225, asparagine 260, and 283–287 each bind substrate; these read KFIPRQ, KLY, and DRAGH.

This sequence belongs to the NAD(P)-dependent epimerase/dehydratase family. dTDP-glucose dehydratase subfamily. As to quaternary structure, homodimer. NAD(+) serves as cofactor.

The enzyme catalyses dTDP-alpha-D-glucose = dTDP-4-dehydro-6-deoxy-alpha-D-glucose + H2O. The protein operates within carbohydrate biosynthesis; dTDP-L-rhamnose biosynthesis. In terms of biological role, catalyzes the dehydration of dTDP-D-glucose to form dTDP-6-deoxy-D-xylo-4-hexulose via a three-step process involving oxidation, dehydration and reduction. This Streptococcus mutans serotype c (strain ATCC 700610 / UA159) protein is dTDP-glucose 4,6-dehydratase (rmlB).